The chain runs to 268 residues: Tryptophan synthase alpha chain (268 aa).

Active-site proton acceptor residues include Glu49 and Asp60.

The protein belongs to the TrpA family. As to quaternary structure, tetramer of two alpha and two beta chains.

It carries out the reaction (1S,2R)-1-C-(indol-3-yl)glycerol 3-phosphate + L-serine = D-glyceraldehyde 3-phosphate + L-tryptophan + H2O. Its pathway is amino-acid biosynthesis; L-tryptophan biosynthesis; L-tryptophan from chorismate: step 5/5. The alpha subunit is responsible for the aldol cleavage of indoleglycerol phosphate to indole and glyceraldehyde 3-phosphate. This chain is Tryptophan synthase alpha chain, found in Xylella fastidiosa (strain M23).